The following is a 653-amino-acid chain: Fusexin 1 (653 aa).

The signal sequence occupies residues 1–23 (MKNGLKASVVALFFLLAASSASA). Residues 24-559 (ATNSVDTVTY…MEKALSGNAG (536 aa)) are Extracellular-facing. Disulfide bonds link Cys-126/Cys-166, Cys-397/Cys-440, Cys-467/Cys-490, and Cys-502/Cys-519. Residues 154–159 (DTWTGQ) form a fusion loop region. Residues 560–580 (ALTWAQLLLSFIGFLAGFALV) form a helical membrane-spanning segment. Residues 581 to 600 (GVKLGKMVDGLATEFIPLSD) lie on the Cytoplasmic side of the membrane. 2 helical membrane passes run 601 to 621 (AVVR…AVYQ) and 622 to 642 (LVTN…TGYL). The Cytoplasmic segment spans residues 643-653 (YLKGTTPDINL).

The protein belongs to the HAP2/GCS1 family. Fusexin 1 subfamily. Homotrimer stabilized by interdomain contacts and numerous Ca(2+) and Na(+) ions.

The protein resides in the cell surface. The protein localises to the cell membrane. In terms of biological role, exhibits fusogenic activity. Mediates cell-cell fusion in mammalian cells (bilateral fusion). The sequence is that of Fusexin 1 from Haloferax sp. (strain Q22).